A 380-amino-acid chain; its full sequence is DNA replication and repair protein RecF (380 aa).

30-37 (GPNGFGKT) lines the ATP pocket.

It belongs to the RecF family.

It is found in the cytoplasm. In terms of biological role, the RecF protein is involved in DNA metabolism; it is required for DNA replication and normal SOS inducibility. RecF binds preferentially to single-stranded, linear DNA. It also seems to bind ATP. The sequence is that of DNA replication and repair protein RecF from Mycobacterium sp. (strain JLS).